A 275-amino-acid polypeptide reads, in one-letter code: 3-methyl-2-oxobutanoate hydroxymethyltransferase (275 aa).

Mg(2+) is bound by residues aspartate 44 and aspartate 83. 3-methyl-2-oxobutanoate-binding positions include 44-45, aspartate 83, and lysine 113; that span reads DS. A Mg(2+)-binding site is contributed by glutamate 115. Residue glutamate 182 is the Proton acceptor of the active site.

This sequence belongs to the PanB family. As to quaternary structure, homodecamer; pentamer of dimers. It depends on Mg(2+) as a cofactor.

The protein localises to the cytoplasm. It catalyses the reaction 3-methyl-2-oxobutanoate + (6R)-5,10-methylene-5,6,7,8-tetrahydrofolate + H2O = 2-dehydropantoate + (6S)-5,6,7,8-tetrahydrofolate. The protein operates within cofactor biosynthesis; (R)-pantothenate biosynthesis; (R)-pantoate from 3-methyl-2-oxobutanoate: step 1/2. Its function is as follows. Catalyzes the reversible reaction in which hydroxymethyl group from 5,10-methylenetetrahydrofolate is transferred onto alpha-ketoisovalerate to form ketopantoate. This chain is 3-methyl-2-oxobutanoate hydroxymethyltransferase, found in Clostridium botulinum (strain Alaska E43 / Type E3).